The primary structure comprises 127 residues: Alpha-hordothionin (127 aa).

Positions Met1–Gly18 are cleaved as a signal peptide. 4 disulfides stabilise this stretch: Cys21–Cys57, Cys22–Cys49, Cys30–Cys47, and Cys34–Cys43. Residues Leu64–Ala127 constitute a propeptide, acidic domain.

The protein belongs to the plant thionin (TC 1.C.44) family. 4 C-C subfamily.

The protein resides in the secreted. In terms of biological role, thionins are small plant proteins which are toxic to animal cells. They seem to exert their toxic effect at the level of the cell membrane. Their precise function is not known. The chain is Alpha-hordothionin (THI1.1) from Hordeum vulgare (Barley).